A 399-amino-acid chain; its full sequence is Phosphoglycerate kinase (399 aa).

Substrate is bound by residues 22–24, arginine 38, 61–64, arginine 120, and arginine 153; these read DFN and HLGR. Residues lysine 204, glutamate 326, and 352-355 each bind ATP; that span reads GGDT.

The protein belongs to the phosphoglycerate kinase family. As to quaternary structure, monomer.

Its subcellular location is the cytoplasm. It catalyses the reaction (2R)-3-phosphoglycerate + ATP = (2R)-3-phospho-glyceroyl phosphate + ADP. The protein operates within carbohydrate degradation; glycolysis; pyruvate from D-glyceraldehyde 3-phosphate: step 2/5. The chain is Phosphoglycerate kinase from Pelobacter propionicus (strain DSM 2379 / NBRC 103807 / OttBd1).